Consider the following 502-residue polypeptide: 2,3-bisphosphoglycerate-independent phosphoglycerate mutase (502 aa).

The Mn(2+) site is built by aspartate 13 and serine 63. The active-site Phosphoserine intermediate is the serine 63. Residues histidine 117, 146-147, arginine 177, arginine 183, 251-254, and lysine 324 contribute to the substrate site; these read RD and RSDR. Positions 389, 393, 430, 431, and 448 each coordinate Mn(2+).

It belongs to the BPG-independent phosphoglycerate mutase family. As to quaternary structure, monomer. The cofactor is Mn(2+).

It catalyses the reaction (2R)-2-phosphoglycerate = (2R)-3-phosphoglycerate. It functions in the pathway carbohydrate degradation; glycolysis; pyruvate from D-glyceraldehyde 3-phosphate: step 3/5. In terms of biological role, catalyzes the interconversion of 2-phosphoglycerate and 3-phosphoglycerate. This chain is 2,3-bisphosphoglycerate-independent phosphoglycerate mutase, found in Ureaplasma urealyticum serovar 10 (strain ATCC 33699 / Western).